Consider the following 1617-residue polypeptide: Mitogen-activated protein kinase kinae kinase bck1 (1617 aa).

Disordered stretches follow at residues 1 to 73 (MDGQ…SQLQ), 167 to 199 (GPVH…RTMP), 211 to 253 (SVAS…GGMS), 345 to 399 (RQIH…SPNL), 455 to 555 (DHRR…SSSY), 568 to 633 (KRSK…LRGK), 739 to 820 (GVPL…ISPE), 832 to 1144 (EHKR…RGDI), and 1164 to 1277 (DIDL…EILR). The segment covering 19-28 (TQPSQSHMLS) has biased composition (low complexity). Over residues 44–60 (VMPPPPPGPPPGPPPGP) the composition is skewed to pro residues. The segment covering 220 to 248 (TAQNHQSQTGQTNEPTKSPSHRQNNSNTL) has biased composition (polar residues). Over residues 482 to 504 (KSGSPATQHATLNQGLSSSSTGD) the composition is skewed to polar residues. Residues 524-533 (RYYESRKGQE) show a composition bias toward basic and acidic residues. 2 stretches are compositionally biased toward polar residues: residues 535-555 (IRPS…SSSY) and 586-596 (ESPTSPVNLRQ). 2 stretches are compositionally biased toward basic and acidic residues: residues 832-841 (EHKREVERKQ) and 871-885 (FDER…KKAD). Composition is skewed to polar residues over residues 897–907 (PQESYTLTRIN) and 956–980 (GGKQ…PQSS). Basic and acidic residues-rich tracts occupy residues 1128–1140 (EDER…DSFA) and 1189–1198 (PENDLHKKEN). Composition is skewed to polar residues over residues 1199 to 1208 (QPSSSYTGEM) and 1257 to 1272 (NQAS…NQKS). Residues 1323 to 1596 (IIRGQLIGKG…QTLLTRHPFC (274 aa)) form the Protein kinase domain. ATP is bound by residues 1329–1337 (IGKGTYGRV) and Lys-1352. Asp-1453 functions as the Proton acceptor in the catalytic mechanism.

Belongs to the protein kinase superfamily. STE Ser/Thr protein kinase family. MAP kinase kinase subfamily.

The catalysed reaction is L-seryl-[protein] + ATP = O-phospho-L-seryl-[protein] + ADP + H(+). It carries out the reaction L-threonyl-[protein] + ATP = O-phospho-L-threonyl-[protein] + ADP + H(+). Mitogen-activated kinase kinase kinase (MAPKKK), part of the cell wall integrity (CWI) signaling pathway composed by three protein kinases bck1, mkk2 and mpkA and responsible for the maintaining of cell-wall integrity balance. The CWI pathway also regulates the oxidative stress response, as well as the production of some secondary metabolites including pyomelanin. The protein is Mitogen-activated protein kinase kinae kinase bck1 of Aspergillus fumigatus (strain CBS 144.89 / FGSC A1163 / CEA10) (Neosartorya fumigata).